The following is a 309-amino-acid chain: Porphobilinogen deaminase (309 aa).

C241 is modified (S-(dipyrrolylmethanemethyl)cysteine).

Belongs to the HMBS family. In terms of assembly, monomer. Requires dipyrromethane as cofactor.

The enzyme catalyses 4 porphobilinogen + H2O = hydroxymethylbilane + 4 NH4(+). It functions in the pathway porphyrin-containing compound metabolism; protoporphyrin-IX biosynthesis; coproporphyrinogen-III from 5-aminolevulinate: step 2/4. Its function is as follows. Tetrapolymerization of the monopyrrole PBG into the hydroxymethylbilane pre-uroporphyrinogen in several discrete steps. This Oceanobacillus iheyensis (strain DSM 14371 / CIP 107618 / JCM 11309 / KCTC 3954 / HTE831) protein is Porphobilinogen deaminase.